The chain runs to 424 residues: Putative fasciclin-like arabinogalactan protein 20 (424 aa).

A helical transmembrane segment spans residues 46-66 (LLTTFFLIFFVLDIDLVATSM). The region spanning 56–194 (VLDIDLVATS…YVVIYGSDEF (139 aa)) is the FAS1 1 domain. N-linked (GlcNAc...) asparagine glycans are attached at residues Asn153 and Asn160. Residues 199–226 (TKISDDSSSSSSIPSTTSSTGSIPIPSS) are compositionally biased toward low complexity. Positions 199–246 (TKISDDSSSSSSIPSTTSSTGSIPIPSSATQTPPSPNIASDSTRNLPN) are disordered. Polar residues predominate over residues 227 to 246 (ATQTPPSPNIASDSTRNLPN). Asn246, Asn283, and Asn287 each carry an N-linked (GlcNAc...) asparagine glycan. The FAS1 2 domain occupies 250 to 384 (PVNRFNIFES…IAVHGFNQMI (135 aa)). Residues 405 to 424 (QEEEGVHGEYSSELGDYGLH) are disordered.

It belongs to the fasciclin-like AGP family.

It is found in the membrane. May be a cell surface adhesion protein. The chain is Putative fasciclin-like arabinogalactan protein 20 (FLA20) from Arabidopsis thaliana (Mouse-ear cress).